A 553-amino-acid chain; its full sequence is Dihydroxy-acid dehydratase (553 aa).

C49 lines the [2Fe-2S] cluster pocket. D81 serves as a coordination point for Mg(2+). C122 is a binding site for [2Fe-2S] cluster. D123 and K124 together coordinate Mg(2+). N6-carboxylysine is present on K124. Residue C194 coordinates [2Fe-2S] cluster. A Mg(2+)-binding site is contributed by E444. S470 acts as the Proton acceptor in catalysis.

Belongs to the IlvD/Edd family. Homodimer. Requires [2Fe-2S] cluster as cofactor. Mg(2+) serves as cofactor.

It catalyses the reaction (2R)-2,3-dihydroxy-3-methylbutanoate = 3-methyl-2-oxobutanoate + H2O. The enzyme catalyses (2R,3R)-2,3-dihydroxy-3-methylpentanoate = (S)-3-methyl-2-oxopentanoate + H2O. Its pathway is amino-acid biosynthesis; L-isoleucine biosynthesis; L-isoleucine from 2-oxobutanoate: step 3/4. It participates in amino-acid biosynthesis; L-valine biosynthesis; L-valine from pyruvate: step 3/4. Its function is as follows. Functions in the biosynthesis of branched-chain amino acids. Catalyzes the dehydration of (2R,3R)-2,3-dihydroxy-3-methylpentanoate (2,3-dihydroxy-3-methylvalerate) into 2-oxo-3-methylpentanoate (2-oxo-3-methylvalerate) and of (2R)-2,3-dihydroxy-3-methylbutanoate (2,3-dihydroxyisovalerate) into 2-oxo-3-methylbutanoate (2-oxoisovalerate), the penultimate precursor to L-isoleucine and L-valine, respectively. The sequence is that of Dihydroxy-acid dehydratase from Aeropyrum pernix (strain ATCC 700893 / DSM 11879 / JCM 9820 / NBRC 100138 / K1).